Reading from the N-terminus, the 439-residue chain is Divalent metal cation transporter MntH 1 (439 aa).

The next 9 helical transmembrane spans lie at 64 to 84, 139 to 161, 171 to 191, 214 to 234, 262 to 282, 300 to 320, 359 to 379, 380 to 400, and 418 to 438; these read FGYA…LLQS, LLGV…VLAL, AIVL…LVLI, PLYL…LYLH, IGSL…AAAA, LLDP…ALLA, LVPA…KLLV, LSQV…IRFS, and LAWS…YFWF.

This sequence belongs to the NRAMP family.

It localises to the cell inner membrane. Functionally, h(+)-stimulated, divalent metal cation uptake system. In Pseudomonas aeruginosa (strain ATCC 15692 / DSM 22644 / CIP 104116 / JCM 14847 / LMG 12228 / 1C / PRS 101 / PAO1), this protein is Divalent metal cation transporter MntH 1.